We begin with the raw amino-acid sequence, 430 residues long: Histidine--tRNA ligase (430 aa).

It belongs to the class-II aminoacyl-tRNA synthetase family. As to quaternary structure, homodimer.

It is found in the cytoplasm. It catalyses the reaction tRNA(His) + L-histidine + ATP = L-histidyl-tRNA(His) + AMP + diphosphate + H(+). This Chlamydia pneumoniae (Chlamydophila pneumoniae) protein is Histidine--tRNA ligase (hisS).